The chain runs to 1213 residues: DNA-directed RNA polymerase subunit beta' (1213 aa).

The Zn(2+) site is built by Cys60, Cys62, Cys75, and Cys78. Mg(2+)-binding residues include Asp449, Asp451, and Asp453. Residues Cys818, Cys892, Cys899, and Cys902 each coordinate Zn(2+).

Belongs to the RNA polymerase beta' chain family. In terms of assembly, the RNAP catalytic core consists of 2 alpha, 1 beta, 1 beta' and 1 omega subunit. When a sigma factor is associated with the core the holoenzyme is formed, which can initiate transcription. Requires Mg(2+) as cofactor. It depends on Zn(2+) as a cofactor.

It carries out the reaction RNA(n) + a ribonucleoside 5'-triphosphate = RNA(n+1) + diphosphate. DNA-dependent RNA polymerase catalyzes the transcription of DNA into RNA using the four ribonucleoside triphosphates as substrates. In Lactiplantibacillus plantarum (strain ATCC BAA-793 / NCIMB 8826 / WCFS1) (Lactobacillus plantarum), this protein is DNA-directed RNA polymerase subunit beta'.